We begin with the raw amino-acid sequence, 416 residues long: Serine hydroxymethyltransferase (416 aa).

Residues L121 and 125-127 (GHL) each bind (6S)-5,6,7,8-tetrahydrofolate. K229 is subject to N6-(pyridoxal phosphate)lysine.

The protein belongs to the SHMT family. In terms of assembly, homodimer. Pyridoxal 5'-phosphate is required as a cofactor.

It is found in the cytoplasm. It catalyses the reaction (6R)-5,10-methylene-5,6,7,8-tetrahydrofolate + glycine + H2O = (6S)-5,6,7,8-tetrahydrofolate + L-serine. It participates in one-carbon metabolism; tetrahydrofolate interconversion. Its pathway is amino-acid biosynthesis; glycine biosynthesis; glycine from L-serine: step 1/1. Its function is as follows. Catalyzes the reversible interconversion of serine and glycine with tetrahydrofolate (THF) serving as the one-carbon carrier. This reaction serves as the major source of one-carbon groups required for the biosynthesis of purines, thymidylate, methionine, and other important biomolecules. Also exhibits THF-independent aldolase activity toward beta-hydroxyamino acids, producing glycine and aldehydes, via a retro-aldol mechanism. The polypeptide is Serine hydroxymethyltransferase (Azoarcus sp. (strain BH72)).